The sequence spans 69 residues: Large ribosomal subunit protein bL31 (69 aa).

Zn(2+) is bound by residues C17, C19, C37, and C40.

This sequence belongs to the bacterial ribosomal protein bL31 family. Type A subfamily. Part of the 50S ribosomal subunit. Requires Zn(2+) as cofactor.

Binds the 23S rRNA. The chain is Large ribosomal subunit protein bL31 from Caldicellulosiruptor saccharolyticus (strain ATCC 43494 / DSM 8903 / Tp8T 6331).